We begin with the raw amino-acid sequence, 86 residues long: DNA-directed RNA polymerase subunit omega (86 aa).

This sequence belongs to the RNA polymerase subunit omega family. The RNAP catalytic core consists of 2 alpha, 1 beta, 1 beta' and 1 omega subunit. When a sigma factor is associated with the core the holoenzyme is formed, which can initiate transcription.

It carries out the reaction RNA(n) + a ribonucleoside 5'-triphosphate = RNA(n+1) + diphosphate. Promotes RNA polymerase assembly. Latches the N- and C-terminal regions of the beta' subunit thereby facilitating its interaction with the beta and alpha subunits. This Agathobacter rectalis (strain ATCC 33656 / DSM 3377 / JCM 17463 / KCTC 5835 / VPI 0990) (Eubacterium rectale) protein is DNA-directed RNA polymerase subunit omega.